The sequence spans 449 residues: Alginate biosynthesis transcriptional regulatory protein AlgB (449 aa).

One can recognise a Response regulatory domain in the interval 10 to 124; the sequence is RILLVDDESA…QLRLAAAKQL (115 aa). Asp59 is modified (4-aspartylphosphate). Positions 147 to 376 constitute a Sigma-54 factor interaction domain; the sequence is LESHSPAMAA…LRNVIERASI (230 aa). ATP is bound by residues 175 to 182 and 238 to 247; these read GESGSGKG and ADGGTLFLDE. Positions 426–445 form a DNA-binding region, H-T-H motif; the sequence is LDQAAKTLGIDASTLYRKRK.

Phosphorylated by KinB.

It participates in glycan biosynthesis; alginate biosynthesis [regulation]. Functionally, member of the two-component regulatory system AlgB/KinB involved in regulation of alginate biosynthesis genes. Positive regulator of the alginate biosynthetic gene AlgD. The protein is Alginate biosynthesis transcriptional regulatory protein AlgB (algB) of Pseudomonas aeruginosa (strain ATCC 15692 / DSM 22644 / CIP 104116 / JCM 14847 / LMG 12228 / 1C / PRS 101 / PAO1).